The chain runs to 166 residues: CDP-archaeol synthase (166 aa).

Transmembrane regions (helical) follow at residues 7–27 (LLLS…GPFI), 55–75 (LIVA…FFTA), 78–98 (TLIS…GAFI), 116–136 (LDFV…ITWY), and 138–158 (FLFI…VAYL).

This sequence belongs to the CDP-archaeol synthase family. It depends on Mg(2+) as a cofactor.

The protein resides in the cell membrane. It carries out the reaction 2,3-bis-O-(geranylgeranyl)-sn-glycerol 1-phosphate + CTP + H(+) = CDP-2,3-bis-O-(geranylgeranyl)-sn-glycerol + diphosphate. The protein operates within membrane lipid metabolism; glycerophospholipid metabolism. Catalyzes the formation of CDP-2,3-bis-(O-geranylgeranyl)-sn-glycerol (CDP-archaeol) from 2,3-bis-(O-geranylgeranyl)-sn-glycerol 1-phosphate (DGGGP) and CTP. This reaction is the third ether-bond-formation step in the biosynthesis of archaeal membrane lipids. The sequence is that of CDP-archaeol synthase from Saccharolobus islandicus (strain L.S.2.15 / Lassen #1) (Sulfolobus islandicus).